Here is a 58-residue protein sequence, read N- to C-terminus: Small ribosomal subunit protein bS21 (58 aa).

The protein belongs to the bacterial ribosomal protein bS21 family.

The chain is Small ribosomal subunit protein bS21 from Staphylococcus aureus (strain bovine RF122 / ET3-1).